The chain runs to 778 residues: Endonuclease MutS2 (778 aa).

328–335 (GPNTGGKT) is an ATP binding site. Residues 702–777 (LDLRGKRYEE…GSGATIVTFK (76 aa)) enclose the Smr domain.

Belongs to the DNA mismatch repair MutS family. MutS2 subfamily. Homodimer. Binds to stalled ribosomes, contacting rRNA.

In terms of biological role, endonuclease that is involved in the suppression of homologous recombination and thus may have a key role in the control of bacterial genetic diversity. Functionally, acts as a ribosome collision sensor, splitting the ribosome into its 2 subunits. Detects stalled/collided 70S ribosomes which it binds and splits by an ATP-hydrolysis driven conformational change. Acts upstream of the ribosome quality control system (RQC), a ribosome-associated complex that mediates the extraction of incompletely synthesized nascent chains from stalled ribosomes and their subsequent degradation. Probably generates substrates for RQC. The protein is Endonuclease MutS2 of Streptococcus pneumoniae (strain CGSP14).